Consider the following 240-residue polypeptide: Keratinocyte-associated protein 3 (240 aa).

Helical transmembrane passes span 21–41 (VGLALILVGHVNLLVGAVLHG), 63–83 (VISVGSGLLSVSVGLVALLAS), 95–115 (LLTLALVNLLLSAACSMGLLL), and 163–183 (ALALWIPSLFMSAAEAALSGY).

It belongs to the TMEM54 family.

It is found in the membrane. This is Keratinocyte-associated protein 3 (Krtcap3) from Mus musculus (Mouse).